The primary structure comprises 209 residues: MKTSEWIDISQPLNNNIATWPGDTPFSYEVSWSKEESGSVNVGKLTMSIHTGTHIDAPFHFDNDGKKVLDLDVQVYVGPARIIDVSNLESIGKKELESFHLEGVERLLLRTSSHGKAEEFPEVIPHLRADIASFLSEKGIRLIGVDVPSVDPLDDKELAAHHQLFKHGIHILENVVLDHVADGDYELIALPLALTDADGSPVRAVIRPI.

Tryptophan 20 contacts substrate. The Zn(2+) site is built by histidine 50, histidine 54, and aspartate 56. The active-site Proton donor/acceptor is the histidine 60. The Zn(2+) site is built by histidine 161 and glutamate 173.

The protein belongs to the Cyclase 1 superfamily. KynB family. In terms of assembly, homodimer. Zn(2+) serves as cofactor.

It catalyses the reaction N-formyl-L-kynurenine + H2O = L-kynurenine + formate + H(+). The protein operates within amino-acid degradation; L-tryptophan degradation via kynurenine pathway; L-kynurenine from L-tryptophan: step 2/2. Functionally, catalyzes the hydrolysis of N-formyl-L-kynurenine to L-kynurenine, the second step in the kynurenine pathway of tryptophan degradation. The polypeptide is Kynurenine formamidase (Bacillus cereus (strain ATCC 14579 / DSM 31 / CCUG 7414 / JCM 2152 / NBRC 15305 / NCIMB 9373 / NCTC 2599 / NRRL B-3711)).